The chain runs to 76 residues: Envelope small membrane protein (76 aa).

Over M1 to V14 the chain is Virion surface. Residues I15–V35 traverse the membrane as a helical segment. The Intravirion segment spans residues N36–V76.

Belongs to the alphacoronaviruses E protein family. In terms of assembly, homopentamer. Interacts with membrane protein M in the budding compartment of the host cell, which is located between endoplasmic reticulum and the Golgi complex. Interacts with Nucleoprotein. Interacts with host IRF3; this interaction inhibits type I IFN production.

Its subcellular location is the host Golgi apparatus membrane. It is found in the host endoplasmic reticulum. Plays a central role in virus morphogenesis and assembly. Acts as a viroporin and self-assembles in host membranes forming pentameric protein-lipid pores that allow ion transport. Also plays a role in the induction of apoptosis. Counteracts the production of type I interferon by interacting with host IRF3 component and preventing its translocation to the host nucleus. This is Envelope small membrane protein from Sus scrofa (Pig).